Consider the following 462-residue polypeptide: GTPase Der (462 aa).

EngA-type G domains lie at 3–170 (ITIA…TSQK) and 201–372 (IKIA…FNSI). Residues 9–16 (GRTNVGKS), 57–61 (DTPGI), 122–125 (NKIE), 207–214 (GKPNVGKS), 254–258 (DTAGI), and 319–322 (NKND) each bind GTP. The KH-like domain occupies 373–457 (KKIHTSKITE…SIVLYFKSSK (85 aa)).

This sequence belongs to the TRAFAC class TrmE-Era-EngA-EngB-Septin-like GTPase superfamily. EngA (Der) GTPase family. In terms of assembly, associates with the 50S ribosomal subunit.

In terms of biological role, GTPase that plays an essential role in the late steps of ribosome biogenesis. The protein is GTPase Der of Buchnera aphidicola subsp. Baizongia pistaciae (strain Bp).